Consider the following 243-residue polypeptide: Ribosomal RNA small subunit methyltransferase E 2 (243 aa).

This sequence belongs to the RNA methyltransferase RsmE family.

It is found in the cytoplasm. It catalyses the reaction uridine(1498) in 16S rRNA + S-adenosyl-L-methionine = N(3)-methyluridine(1498) in 16S rRNA + S-adenosyl-L-homocysteine + H(+). Its function is as follows. Specifically methylates the N3 position of the uracil ring of uridine 1498 (m3U1498) in 16S rRNA. Acts on the fully assembled 30S ribosomal subunit. The polypeptide is Ribosomal RNA small subunit methyltransferase E 2 (rsmE2) (Borreliella burgdorferi (strain ATCC 35210 / DSM 4680 / CIP 102532 / B31) (Borrelia burgdorferi)).